The following is an 802-amino-acid chain: MMMDEDVEQASLMSFNDRPRAFPNMRSKTYSPLIFRIIRKLNVRVLSIILLFCFGAIFYMGASTSPIIVFVFTVCIISFLLSIYLTKWVLAKDEGPPEMVEISDAIRDGAEGFFRTQYSTISKMAILLAFVILCIYLFRSLTPQQEAAGLGRAMSAYITVAAFLLGALCSGIAGYVGMWVSVRANVRVSSAARRSAREALQIAVRAGGFSALVVVGMAVIGIAILYSTFYVWLGVGSPGSMNVTDLPLLLVGYGFGASFVALFAQLGGGIYTKGADVGADLVGKVEQGIPEDDPRNPAVIADLVGDNVGDCAARGADLFESIAAEIISAMILGGTMAKKCKIEDPSGFILFPLVVHSFDLIISSIGILSIKGTRDASVKSPVEDPMAVLQKGYSLTIILAVITFGASTRWLLYTEQAPSAWFNFALCGLVGIITAYIFVWISKYYTDYKHEPVRTLALASSTGHGTNIIAGVSLGLESTALPVLTISVAIISAYWLGNTSGLVDENGIPTGGLFGTAVATMGMLSTAAYVLTMDMFGPIADNAGGIVEMSQQPESVREITDLLDAVGNTTKATTKGFAIGSAALASFLLFSAYMDEVSAFANVSFKEVDIAIPEVFVGGLLGAMLIFLFSAWACAAVGRTAQEVVNEVRRQFIERPGIMEYKEKPDYSRCVAIVASAALREMIKPGALAIASPIVVGLVFRILGYYTGQPLLGAKVVASMLMFATVCGILMALFLNTAGGAWDNAKKYIETGALGGKGSEAHKAAVTGDTVGDPFKDTAGPSIHVLIKMLATITLVMAPVFL.

6 consecutive transmembrane segments (helical) span residues 45 to 65 (VLSI…ASTS), 66 to 86 (PIIV…IYLT), 118 to 138 (YSTI…IYLF), 160 to 180 (VAAF…GMWV), 206 to 226 (AGGF…AILY), and 246 to 266 (LPLL…FAQL). Position 273 (lysine 273) interacts with substrate. Residues aspartate 276, aspartate 280, and aspartate 306 each contribute to the Mg(2+) site. A run of 5 helical transmembrane segments spans residues 348–368 (FILF…IGIL), 386–406 (MAVL…TFGA), 421–441 (WFNF…FVWI), 468–488 (IIAG…TISV), and 511–531 (GGLF…AYVL). 2 residues coordinate Mg(2+): aspartate 541 and asparagine 568. 4 consecutive transmembrane segments (helical) span residues 577–597 (FAIG…MDEV), 615–635 (VFVG…WACA), 686–706 (GALA…LGYY), and 716–736 (VVAS…LFLN). Mg(2+)-binding residues include aspartate 743 and aspartate 773. Lysine 776 is a substrate binding site. The chain crosses the membrane as a helical span at residues 782-802 (SIHVLIKMLATITLVMAPVFL).

Belongs to the H(+)-translocating pyrophosphatase (TC 3.A.10) family. K(+)-insensitive subfamily. In terms of assembly, monomer. As to expression, ubiquitous. Mostly expressed in cotyledons, roots and flowers. Especially high levels in trichomes, sepals and stamen filaments.

The protein localises to the golgi apparatus membrane. The enzyme catalyses diphosphate + H2O + H(+)(in) = 2 phosphate + 2 H(+)(out). Its activity is regulated as follows. Activated by Mg(+) but not by K(+). Inhibited by Ca(2+). Its function is as follows. Pyrophosphatase active in both inorganic pyrophosphate hydrolysis and H(+) translocation. This Arabidopsis thaliana (Mouse-ear cress) protein is Pyrophosphate-energized membrane proton pump 2 (AVPL1).